Here is a 101-residue protein sequence, read N- to C-terminus: Small ribosomal subunit protein uS14 (101 aa).

The disordered stretch occupies residues 49 to 70 (QSLPRDSSPSRQRNRCNQTGRP). Polar residues predominate over residues 52–68 (PRDSSPSRQRNRCNQTG).

Belongs to the universal ribosomal protein uS14 family. Part of the 30S ribosomal subunit. Contacts proteins S3 and S10.

In terms of biological role, binds 16S rRNA, required for the assembly of 30S particles and may also be responsible for determining the conformation of the 16S rRNA at the A site. The protein is Small ribosomal subunit protein uS14 of Yersinia pseudotuberculosis serotype O:1b (strain IP 31758).